We begin with the raw amino-acid sequence, 539 residues long: 2-isopropylmalate synthase (539 aa).

The Pyruvate carboxyltransferase domain maps to 8 to 269 (VLIFDTTLRD…YFNPFFGRPP (262 aa)). 4 residues coordinate Mn(2+): aspartate 17, histidine 208, histidine 210, and asparagine 244. Positions 408–539 (QLKLVQVSCG…DLAKVDKKGI (132 aa)) are regulatory domain.

The protein belongs to the alpha-IPM synthase/homocitrate synthase family. LeuA type 1 subfamily. In terms of assembly, homodimer. The cofactor is Mn(2+).

Its subcellular location is the cytoplasm. It catalyses the reaction 3-methyl-2-oxobutanoate + acetyl-CoA + H2O = (2S)-2-isopropylmalate + CoA + H(+). It participates in amino-acid biosynthesis; L-leucine biosynthesis; L-leucine from 3-methyl-2-oxobutanoate: step 1/4. Catalyzes the condensation of the acetyl group of acetyl-CoA with 3-methyl-2-oxobutanoate (2-ketoisovalerate) to form 3-carboxy-3-hydroxy-4-methylpentanoate (2-isopropylmalate). The sequence is that of 2-isopropylmalate synthase from Prochlorococcus marinus (strain NATL1A).